Reading from the N-terminus, the 198-residue chain is MLIAIVGKPGVGKTSLLQYLKDNYHFSVFYADSFIHEQYQKNNPGYQLIMDHFGKEFVNQTEVDRKKLANYVFSDDKLIEKLSLVTKPLLIAWIKSLKTQFQKKLALIEIAVMLNYWNEYRSLFDYVIKLERDDQLVNLALQQRNSHKKVKDLIKEPNCKIDTIFNNDSIATAALKLIKLLETFLERNKCRCDCCHIQ.

In terms of domain architecture, DPCK spans 2-90; sequence LIAIVGKPGV…KLSLVTKPLL (89 aa). Residue 10 to 15 coordinates ATP; the sequence is GVGKTS.

The protein belongs to the CoaE family.

The protein resides in the cytoplasm. It carries out the reaction 3'-dephospho-CoA + ATP = ADP + CoA + H(+). Its pathway is cofactor biosynthesis; coenzyme A biosynthesis; CoA from (R)-pantothenate: step 5/5. Catalyzes the phosphorylation of the 3'-hydroxyl group of dephosphocoenzyme A to form coenzyme A. The protein is Dephospho-CoA kinase of Mycoplasma genitalium (strain ATCC 33530 / DSM 19775 / NCTC 10195 / G37) (Mycoplasmoides genitalium).